The primary structure comprises 61 residues: Large ribosomal subunit protein uL30 (61 aa).

This sequence belongs to the universal ribosomal protein uL30 family. As to quaternary structure, part of the 50S ribosomal subunit.

The chain is Large ribosomal subunit protein uL30 from Teredinibacter turnerae (strain ATCC 39867 / T7901).